Reading from the N-terminus, the 160-residue chain is Cyanate hydratase (160 aa).

Active-site residues include Arg-100, Glu-103, and Ser-126.

It belongs to the cyanase family.

It carries out the reaction cyanate + hydrogencarbonate + 3 H(+) = NH4(+) + 2 CO2. Functionally, catalyzes the reaction of cyanate with bicarbonate to produce ammonia and carbon dioxide. This is Cyanate hydratase from Neosartorya fischeri (strain ATCC 1020 / DSM 3700 / CBS 544.65 / FGSC A1164 / JCM 1740 / NRRL 181 / WB 181) (Aspergillus fischerianus).